A 526-amino-acid chain; its full sequence is ATP synthase subunit alpha (526 aa).

171 to 178 serves as a coordination point for ATP; it reads GDRQTGKT.

It belongs to the ATPase alpha/beta chains family. As to quaternary structure, F-type ATPases have 2 components, CF(1) - the catalytic core - and CF(0) - the membrane proton channel. CF(1) has five subunits: alpha(3), beta(3), gamma(1), delta(1), epsilon(1). CF(0) has three main subunits: a(1), b(2) and c(9-12). The alpha and beta chains form an alternating ring which encloses part of the gamma chain. CF(1) is attached to CF(0) by a central stalk formed by the gamma and epsilon chains, while a peripheral stalk is formed by the delta and b chains.

It is found in the cell membrane. It catalyses the reaction ATP + H2O + 4 H(+)(in) = ADP + phosphate + 5 H(+)(out). Functionally, produces ATP from ADP in the presence of a proton gradient across the membrane. The alpha chain is a regulatory subunit. This Christiangramia forsetii (strain DSM 17595 / CGMCC 1.15422 / KT0803) (Gramella forsetii) protein is ATP synthase subunit alpha.